The chain runs to 211 residues: Pyridoxine/pyridoxamine 5'-phosphate oxidase (211 aa).

Residues 7–10 (RREY) and lysine 65 contribute to the substrate site. FMN contacts are provided by residues 60–65 (RIVLLK), 75–76 (YT), arginine 81, lysine 82, and glutamine 104. 3 residues coordinate substrate: tyrosine 122, arginine 126, and serine 130. FMN-binding positions include 139–140 (QS) and tryptophan 184. 190 to 192 (RLH) contacts substrate. Residue arginine 194 coordinates FMN.

This sequence belongs to the pyridoxamine 5'-phosphate oxidase family. As to quaternary structure, homodimer. The cofactor is FMN.

The catalysed reaction is pyridoxamine 5'-phosphate + O2 + H2O = pyridoxal 5'-phosphate + H2O2 + NH4(+). It carries out the reaction pyridoxine 5'-phosphate + O2 = pyridoxal 5'-phosphate + H2O2. It functions in the pathway cofactor metabolism; pyridoxal 5'-phosphate salvage; pyridoxal 5'-phosphate from pyridoxamine 5'-phosphate: step 1/1. It participates in cofactor metabolism; pyridoxal 5'-phosphate salvage; pyridoxal 5'-phosphate from pyridoxine 5'-phosphate: step 1/1. Catalyzes the oxidation of either pyridoxine 5'-phosphate (PNP) or pyridoxamine 5'-phosphate (PMP) into pyridoxal 5'-phosphate (PLP). The protein is Pyridoxine/pyridoxamine 5'-phosphate oxidase of Vibrio atlanticus (strain LGP32) (Vibrio splendidus (strain Mel32)).